The sequence spans 60 residues: UPF0434 protein Mfla_2088 (60 aa).

Belongs to the UPF0434 family.

This is UPF0434 protein Mfla_2088 from Methylobacillus flagellatus (strain ATCC 51484 / DSM 6875 / VKM B-1610 / KT).